The following is a 427-amino-acid chain: MNRNEILFDRAKAVIPGGVNSPVRAFGSVGGVPRFIKKAEGAYVWDENGTRYTDYVGSWGPAIVGHAHPEVIEAVREAALGGLSFGAPTEGEIAIAEEIAKIMPSVERLRLVSSGTEATMTAIRLARGFTGRDKIIKFEGCYHGHSDSLLVKAGSGLLTFGNPSSAGVPADFTKHTLVLEYNNIAQLEEAFAQSGNDIACVILEPFVGNMNLVRPSEAFVKALRELTEKHGAVLIYDEVMTGFRVALGGAQSLHGITPDLTTMGKVIGGGMPLAAFGGRKDIMECISPLGGVYQAGTLSGNPIAVAAGLKTLEIIRREGFYENLTARTEQLVQGFRTAADAAGIEFTADSVGGMFGLYFAAHAPRNYADMARSNIEGFKQFFHGMLDRGIAFGPSAYEAGFVSAAHTPELIDETVAVAVEVFKAMAA.

At K265 the chain carries N6-(pyridoxal phosphate)lysine.

Belongs to the class-III pyridoxal-phosphate-dependent aminotransferase family. HemL subfamily. Homodimer. Pyridoxal 5'-phosphate serves as cofactor.

The protein localises to the cytoplasm. It carries out the reaction (S)-4-amino-5-oxopentanoate = 5-aminolevulinate. The protein operates within porphyrin-containing compound metabolism; protoporphyrin-IX biosynthesis; 5-aminolevulinate from L-glutamyl-tRNA(Glu): step 2/2. The protein is Glutamate-1-semialdehyde 2,1-aminomutase of Neisseria meningitidis serogroup A / serotype 4A (strain DSM 15465 / Z2491).